A 544-amino-acid chain; its full sequence is MAKRIIYNENARRALEKGIDILCEAVAVTLGPKGRNVVLEKKFGAPQIINDGVTIAKEIELEDHIENTGVALIRQAASKTNDAAGDGTTTATVLAHAMVKAGLRNVAAGANAITLKKGIDKASDFLVSKIKEMAKPIADSNAIAQVGTISAGNDEEVGKMIADAMDKVGKEGVISLEEGKSMETELEVTEGMRFDKGYISPYFATDTERMEAVLDEPYILLTDKKIGLVQDLVPVLEQIARTGKPLLIIAEDIEKEALATLVVNRLRGVLNVAAVKAPGFGDRRKAMLEDMAVLTNGQLITEDAGLKLENAKLEMLGTARRITINKDTTTIVAEGNEAAVGARCEQIKKQMDETDSTYDKEKLQERLAKLAGGVAVVKVGAATETEMKDKKLRLEDAINATKAAVEEGIVPGGGTTLAHLAPALEQWAASSLSGEELIGANIVAAALTAPLMRIAENAGANGAVVAENVKARAGAEGFNAASGEYVDMLAAGIVDPAKVTRSGLQNAASIAGMVLTTECIVADLPEKKEAAPAGGGMGGGDFDY.

ATP is bound by residues 29–32 (TLGP), 86–90 (DGTTT), G413, 479–481 (NAA), and D495.

Belongs to the chaperonin (HSP60) family. As to quaternary structure, forms a cylinder of 14 subunits composed of two heptameric rings stacked back-to-back. Interacts with the co-chaperonin GroES.

The protein resides in the cytoplasm. The catalysed reaction is ATP + H2O + a folded polypeptide = ADP + phosphate + an unfolded polypeptide.. In terms of biological role, together with its co-chaperonin GroES, plays an essential role in assisting protein folding. The GroEL-GroES system forms a nano-cage that allows encapsulation of the non-native substrate proteins and provides a physical environment optimized to promote and accelerate protein folding. This Synechococcus sp. (strain CC9605) protein is Chaperonin GroEL 2.